The primary structure comprises 164 residues: Phosphopantetheine adenylyltransferase (164 aa).

Substrate is bound at residue T9. ATP contacts are provided by residues 9–10 (TF) and H17. Residues K41, L73, and R87 each coordinate substrate. ATP contacts are provided by residues 88–90 (GLR), E98, and 123–129 (YMFISAT).

This sequence belongs to the bacterial CoaD family. In terms of assembly, homohexamer. Requires Mg(2+) as cofactor.

It localises to the cytoplasm. The catalysed reaction is (R)-4'-phosphopantetheine + ATP + H(+) = 3'-dephospho-CoA + diphosphate. It participates in cofactor biosynthesis; coenzyme A biosynthesis; CoA from (R)-pantothenate: step 4/5. Reversibly transfers an adenylyl group from ATP to 4'-phosphopantetheine, yielding dephospho-CoA (dPCoA) and pyrophosphate. This chain is Phosphopantetheine adenylyltransferase, found in Nitrosomonas eutropha (strain DSM 101675 / C91 / Nm57).